Here is a 299-residue protein sequence, read N- to C-terminus: MTIELKNEYLTVQFKTLGGQLTSIKDKDGLEYLWQADPEYWNGQAPILFPICGSLRNDWAIYRPQERPFFTGLIRRHGFVRKEEFTLEEVNENSVTFSIKPNAEMLDNYLYQFELRVVYTLNGKSIRTEFQVTNLETEKTMPYFIGAHPAFNCPLVEGEKYEDYSLEFSEVESCSIPKSFPETGLLDLQDRTPFLENQKSLDLDYSLFSHDAITLDRLKSRSVTLRSRKSGKGLRVDFDDFPNLILWSTTNKSPFIALEPWSGLSTSLEEGNILEDKPQVTKVLPLDTSKKSYDITILN.

This Lactococcus lactis subsp. lactis (Streptococcus lactis) protein is Protein LacX, plasmid (lacX).